A 114-amino-acid polypeptide reads, in one-letter code: MKQKRKTMESINSRLQLVMKSGKYVLGLKETLKVLRQGKAKLIIIANNTPALRKSEIEYYAMLAKTGVHHYSGNNIELGTACGKYFRVCTLAITDPGDSDIIRSMPAEDKGEAK.

The protein belongs to the eukaryotic ribosomal protein eL30 family.

The polypeptide is Large ribosomal subunit protein eL30 (RPL30) (Branchiostoma belcheri (Amphioxus)).